The primary structure comprises 178 residues: Large ribosomal subunit protein uL6 (178 aa).

This sequence belongs to the universal ribosomal protein uL6 family. In terms of assembly, part of the 50S ribosomal subunit.

Its function is as follows. This protein binds to the 23S rRNA, and is important in its secondary structure. It is located near the subunit interface in the base of the L7/L12 stalk, and near the tRNA binding site of the peptidyltransferase center. This Listeria innocua serovar 6a (strain ATCC BAA-680 / CLIP 11262) protein is Large ribosomal subunit protein uL6.